Consider the following 133-residue polypeptide: Type VI secretion amidase effector 2 protein (133 aa).

Residues Cys-23 and His-73 contribute to the active site.

Belongs to the cell wall amidase Dae2/Tae2-like family.

The protein resides in the host periplasm. Its subcellular location is the secreted. It functions in the pathway cell wall degradation; peptidoglycan degradation. Toxic component of a contact-dependent interbacterial competition system (also called effector-immunity systems). Secreted by the SPI-6 type VI secretion system, probably into the periplasm of bacterial target cells. A cell wall amidase with specificity toward the D-meso-DAP-D-alanine bond (D-meso-diaminopimelic-D-alanine) found in peptidoglycan of Gram-negative bacteria. Toxicity is counteracted by a cognate immunity protein Tai2 (t2585), but not immunity proteins associated with a similar endopeptidase in other bacteria. In vitro degrades peptidoglycans from Gram-negative but not Gram-positive bacteria. The polypeptide is Type VI secretion amidase effector 2 protein (Salmonella typhi).